We begin with the raw amino-acid sequence, 378 residues long: DNA primase small subunit PriS (378 aa).

Residues D98, D100, and D282 contribute to the active site.

It belongs to the eukaryotic-type primase small subunit family. Heterodimer of a small subunit (PriS) and a large subunit (PriL). The cofactor is Mg(2+). Requires Mn(2+) as cofactor.

In terms of biological role, catalytic subunit of DNA primase, an RNA polymerase that catalyzes the synthesis of short RNA molecules used as primers for DNA polymerase during DNA replication. The small subunit contains the primase catalytic core and has DNA synthesis activity on its own. Binding to the large subunit stabilizes and modulates the activity, increasing the rate of DNA synthesis while decreasing the length of the DNA fragments, and conferring RNA synthesis capability. The DNA polymerase activity may enable DNA primase to also catalyze primer extension after primer synthesis. May also play a role in DNA repair. This is DNA primase small subunit PriS from Methanosphaerula palustris (strain ATCC BAA-1556 / DSM 19958 / E1-9c).